A 250-amino-acid chain; its full sequence is Uracil-DNA glycosylase (250 aa).

Aspartate 78 acts as the Proton acceptor in catalysis. Residues 228–250 (RGQKPVDWSGEQNNASRQGKFAL) are disordered.

The protein belongs to the uracil-DNA glycosylase (UDG) superfamily. UNG family.

Its subcellular location is the cytoplasm. It carries out the reaction Hydrolyzes single-stranded DNA or mismatched double-stranded DNA and polynucleotides, releasing free uracil.. Excises uracil residues from the DNA which can arise as a result of misincorporation of dUMP residues by DNA polymerase or due to deamination of cytosine. This is Uracil-DNA glycosylase from Bordetella bronchiseptica (strain ATCC BAA-588 / NCTC 13252 / RB50) (Alcaligenes bronchisepticus).